The following is a 37-amino-acid chain: MKVRPSVRKICENCRLIRRKRKILVICTNPKHKQRQG.

This sequence belongs to the bacterial ribosomal protein bL36 family.

The protein localises to the plastid. Its subcellular location is the chloroplast. This Tupiella akineta (Green alga) protein is Large ribosomal subunit protein bL36c.